The chain runs to 775 residues: Tyrosine-protein phosphatase non-receptor type 12 (775 aa).

M1 bears the N-acetylmethionine mark. S19 is subject to Phosphoserine. Positions 28–293 (FARDFMRLRR…ELVHRAIAQL (266 aa)) constitute a Tyrosine-protein phosphatase domain. Residues D199, 231–237 (CSAGCGR), and Q278 each bind substrate. The active-site Phosphocysteine intermediate is C231. The interval 322 to 341 (SSIDSEKQDSPPPKPPRTRS) is disordered. A phosphoserine mark is found at S331, S434, S448, and S467. Residues 344–437 (VEGDAKEEIL…KLERNLSFEI (94 aa)) are interaction with TGFB1I1. A disordered region spans residues 462-775 (KIKSASSSVV…GPREPPSEWT (314 aa)). At T519 the chain carries Phosphothreonine. A phosphoserine mark is found at S550 and S567. The span at 558–573 (NHSQTLKTVSSTPNST) shows a compositional bias: polar residues. T569 bears the Phosphothreonine mark. At S596 the chain carries Phosphoserine. T598 is modified (phosphothreonine). Phosphoserine is present on residues S603, S606, S608, and S613. A compositionally biased stretch (low complexity) spans 622-640 (TSISTASATVSPASSAESA). Phosphoserine is present on S673. Residues 692-711 (VRPEWHELPNQEWSEQRESE) show a composition bias toward basic and acidic residues. The residue at position 748 (S748) is a Phosphoserine. A compositionally biased stretch (basic and acidic residues) spans 766 to 775 (GPREPPSEWT).

The protein belongs to the protein-tyrosine phosphatase family. Non-receptor class 4 subfamily. In terms of assembly, interacts with PSTPIP1 and TGFB1I1. Interacts with PTK2B/PYK2. Interacts with LPXN. Interacts with SORBS2; this interaction greatly enhances WASF1 dephosphorylation and might mediate partial translocation to focal adhesion sites. In terms of processing, phosphorylated by STK24/MST3 and this results in inhibition of its activity.

The protein localises to the cytoplasm. The protein resides in the cell junction. It is found in the focal adhesion. Its subcellular location is the cell projection. It localises to the podosome. It catalyses the reaction O-phospho-L-tyrosyl-[protein] + H2O = L-tyrosyl-[protein] + phosphate. Its function is as follows. Dephosphorylates a range of proteins, and thereby regulates cellular signaling cascades. Dephosphorylates cellular tyrosine kinases, such as ERBB2 and PTK2B/PYK2, and thereby regulates signaling via ERBB2 and PTK2B/PYK2. Selectively dephosphorylates ERBB2 phosphorylated at 'Tyr-1112', 'Tyr-1196', and/or 'Tyr-1248'. This Mus musculus (Mouse) protein is Tyrosine-protein phosphatase non-receptor type 12 (Ptpn12).